Reading from the N-terminus, the 142-residue chain is gSG7 salivary protein (142 aa).

An N-terminal signal peptide occupies residues 1–26; the sequence is MAARMTIMLPLAVALICLLQTEPGMA. 2 cysteine pairs are disulfide-bonded: cysteine 84-cysteine 139 and cysteine 107-cysteine 117.

It localises to the secreted. Functionally, salivary protein that moderately inhibits the alternative pathway for complement system activation in the host. The protein is gSG7 salivary protein of Anopheles darlingi (Mosquito).